A 210-amino-acid polypeptide reads, in one-letter code: Proteasome subunit beta (210 aa).

Positions 1–9 (MDNDKYLKG) are cleaved as a propeptide — removed in mature form; by autocatalysis. The active-site Nucleophile is the T10.

Belongs to the peptidase T1B family. As to quaternary structure, the 20S proteasome core is composed of 14 alpha and 14 beta subunits that assemble into four stacked heptameric rings, resulting in a barrel-shaped structure. The two inner rings, each composed of seven catalytic beta subunits, are sandwiched by two outer rings, each composed of seven alpha subunits. The catalytic chamber with the active sites is on the inside of the barrel. Has a gated structure, the ends of the cylinder being occluded by the N-termini of the alpha-subunits. Is capped at one or both ends by the proteasome regulatory ATPase, PAN.

It is found in the cytoplasm. The enzyme catalyses Cleavage of peptide bonds with very broad specificity.. The formation of the proteasomal ATPase PAN-20S proteasome complex, via the docking of the C-termini of PAN into the intersubunit pockets in the alpha-rings, triggers opening of the gate for substrate entry. Interconversion between the open-gate and close-gate conformations leads to a dynamic regulation of the 20S proteasome proteolysis activity. In terms of biological role, component of the proteasome core, a large protease complex with broad specificity involved in protein degradation. The chain is Proteasome subunit beta from Methanosarcina mazei (strain ATCC BAA-159 / DSM 3647 / Goe1 / Go1 / JCM 11833 / OCM 88) (Methanosarcina frisia).